Consider the following 388-residue polypeptide: Palmitoyltransferase ZDHHC18 (388 aa).

The disordered stretch occupies residues 1–67 (MKDCEYQQIS…GSGSLGRRPR (67 aa)). Residues 1 to 90 (MKDCEYQQIS…CGGRLMLAGH (90 aa)) are Cytoplasmic-facing. Positions 10-27 (SPGAAPLPASPGARRPGP) are enriched in low complexity. Serine 19 carries the phosphoserine modification. The segment covering 28 to 46 (AASPTPGPGPAPPAAPAPP) has biased composition (pro residues). Residues 91–111 (GGVFALTLLLILTTTGLFFVF) form a helical membrane-spanning segment. The Lumenal portion of the chain corresponds to 112-119 (DCPYLARK). Residues 120–140 (LTLAIPIIAAILFFFVMSCLL) form a helical membrane-spanning segment. Residues 141–235 (QTSFTDPGIL…GNCVGRRNYR (95 aa)) are Cytoplasmic-facing. The region spanning 192–242 (KYCFTCKMFRPPRTSHCSVCDNCVERFDHHCPWVGNCVGRRNYRFFYAFIL) is the DHHC domain. The S-palmitoyl cysteine intermediate role is filled by cysteine 222. A helical membrane pass occupies residues 236 to 256 (FFYAFILSLSFLTAFIFACVV). At 257-277 (THLTLRAQGSNFLSTLKETPA) the chain is on the lumenal side. Residues 278–298 (SVLELVICFFSIWSILGLSGF) form a helical membrane-spanning segment. Residues 299–388 (HTYLVASNLT…PDASMVGGHP (90 aa)) are Cytoplasmic-facing. The segment at 364–388 (LPSPIRSDEPACRAKPDASMVGGHP) is disordered. Positions 369-379 (RSDEPACRAKP) are enriched in basic and acidic residues.

This sequence belongs to the DHHC palmitoyltransferase family. ERF2/ZDHHC9 subfamily. As to expression, widely expressed.

The protein localises to the golgi apparatus membrane. The catalysed reaction is L-cysteinyl-[protein] + hexadecanoyl-CoA = S-hexadecanoyl-L-cysteinyl-[protein] + CoA. Palmitoyltransferase that catalyzes the addition of palmitate onto various protein substrates, such as CGAS, HRAS and LCK. Acts as a negative regulator of the cGAS-STING pathway be mediating palmitoylation and inactivation of CGAS. May also have a palmitoyltransferase activity toward the beta-2 adrenergic receptor/ADRB2 and therefore regulate G protein-coupled receptor signaling. The chain is Palmitoyltransferase ZDHHC18 from Homo sapiens (Human).